Here is a 118-residue protein sequence, read N- to C-terminus: Large ribosomal subunit protein bL20 (118 aa).

Belongs to the bacterial ribosomal protein bL20 family.

Functionally, binds directly to 23S ribosomal RNA and is necessary for the in vitro assembly process of the 50S ribosomal subunit. It is not involved in the protein synthesizing functions of that subunit. The sequence is that of Large ribosomal subunit protein bL20 from Thermosipho africanus (strain TCF52B).